The following is a 309-amino-acid chain: Protease HtpX homolog (309 aa).

Helical transmembrane passes span 7–27 and 28–48; these read FILL…IGGP and TGML…YWNA. Zn(2+) is bound at residue H134. The active site involves E135. H138 is a binding site for Zn(2+). Helical transmembrane passes span 149–169 and 177–197; these read VTAT…FFGG and PGGL…AMLV. E206 is a binding site for Zn(2+). The disordered stretch occupies residues 289 to 309; that stretch reads TRGRSGTAVPTGATGKSGPWG.

The protein belongs to the peptidase M48B family. It depends on Zn(2+) as a cofactor.

It localises to the cell inner membrane. The chain is Protease HtpX homolog from Caulobacter sp. (strain K31).